We begin with the raw amino-acid sequence, 635 residues long: Threonine--tRNA ligase (635 aa).

The 61-residue stretch at 1-61 folds into the TGS domain; it reads MVSIRLPDGS…DHDVALAIVT (61 aa). Positions 242–533 are catalytic; sequence DHRKLGKQLD…LIEHHAGAMP (292 aa). Cysteine 333, histidine 384, and histidine 510 together coordinate Zn(2+).

Belongs to the class-II aminoacyl-tRNA synthetase family. As to quaternary structure, homodimer. Zn(2+) is required as a cofactor.

The protein resides in the cytoplasm. The enzyme catalyses tRNA(Thr) + L-threonine + ATP = L-threonyl-tRNA(Thr) + AMP + diphosphate + H(+). Its function is as follows. Catalyzes the attachment of threonine to tRNA(Thr) in a two-step reaction: L-threonine is first activated by ATP to form Thr-AMP and then transferred to the acceptor end of tRNA(Thr). Also edits incorrectly charged L-seryl-tRNA(Thr). The sequence is that of Threonine--tRNA ligase from Paraburkholderia phymatum (strain DSM 17167 / CIP 108236 / LMG 21445 / STM815) (Burkholderia phymatum).